The sequence spans 673 residues: UvrABC system protein B (673 aa).

Residues 26–183 (EGLEDGLAHQ…RRLAELQYAR (158 aa)) form the Helicase ATP-binding domain. An ATP-binding site is contributed by 39–46 (GVTGSGKT). A Beta-hairpin motif is present at residues 92 to 115 (YYDYYQPEAYVPSSDTFIEKDASV). One can recognise a Helicase C-terminal domain in the interval 431 to 597 (QVDDLLSEIR…GLNKKVVDIL (167 aa)). Residues 608–627 (AKGRGKSRPIVEPDNVPMDM) form a disordered region. Residues 633–668 (QQKIHELEGLMMQHAQNLEFEEAAQIRDQLHLLREL) form the UVR domain.

This sequence belongs to the UvrB family. In terms of assembly, forms a heterotetramer with UvrA during the search for lesions. Interacts with UvrC in an incision complex.

It is found in the cytoplasm. Functionally, the UvrABC repair system catalyzes the recognition and processing of DNA lesions. A damage recognition complex composed of 2 UvrA and 2 UvrB subunits scans DNA for abnormalities. Upon binding of the UvrA(2)B(2) complex to a putative damaged site, the DNA wraps around one UvrB monomer. DNA wrap is dependent on ATP binding by UvrB and probably causes local melting of the DNA helix, facilitating insertion of UvrB beta-hairpin between the DNA strands. Then UvrB probes one DNA strand for the presence of a lesion. If a lesion is found the UvrA subunits dissociate and the UvrB-DNA preincision complex is formed. This complex is subsequently bound by UvrC and the second UvrB is released. If no lesion is found, the DNA wraps around the other UvrB subunit that will check the other stand for damage. The protein is UvrABC system protein B of Escherichia coli O81 (strain ED1a).